The chain runs to 532 residues: uncharacterized protein (532 aa).

Helical transmembrane passes span Met-13–Leu-33, Trp-53–Ile-73, Ser-80–Pro-100, Ile-111–Phe-131, Ile-142–Ile-162, Ile-169–Phe-189, Leu-203–Gly-223, Ile-231–Leu-251, Val-273–Leu-293, Leu-306–Phe-326, Leu-334–Ile-354, Ile-361–Thr-381, and Ile-483–Phe-503.

It belongs to the major facilitator superfamily. EmrB family.

It is found in the cell membrane. This is an uncharacterized protein from Bacillus subtilis (strain 168).